Consider the following 1338-residue polypeptide: MDTEDDPLLQDAWLDEEDEEVAFSSRKRREGALLCGKSSCRVRPLRVTLPVSGFWNIVGWIFTNPYCAGFILFLGCAIPAVLAVVMFLHYPALDIDISYNAFEIRNHESSQRFDALALALKSQFGSWGRNRRDLADFTSETLQRLIFEQLQQLHLNASHLQVSTRAKRSAPQGRTSSPEPRAHPHPGNETSRVTRGAPRWDYSNTYISANTQTHAHWRIELIFLARGDSENNIFTTERLVTIHEVERKIMDHPRFREFCWKPHEVLKDLPLGSYSYCSPPSSLMTYFFPTERGGKIYYDGMGQDLADIQGSLELAMTHPEFYWYVDEGLSAENKKSSLLRSEILFGAPLPNYYSVEDRWEEQRHKFQNFVVTYVAMLAKQSTSKVQVLYGGTDLFDYEVRRTFNNDMLLAFISSSCIAVLVYILTSCSVFLSFFGIASIGLSCLVALFLYHVVFGIQYLGILNGVAAFVIVGIGVDDVFVFINTYRQATHLKDLRLRMIHTIQTAGKATFFTSLTTAAAYAANIFSQIPAVHDFGLFMSLIVSCCWVAVLFTMPAALGIWTLYVSPLESSCQNSCSQKCTKKSTLHLAEDLFVASEGTSRAGRETLPYLDDDIPLLSVEEEPVSLEMGDVPLVSVMPENLQLPVEKSNRGHLIAHLQELLEHWVLWSAVKSRWVIVGLFLLVLLLSIFFASRLRPASRAPVLFRPDTNIQVLLDLKYNLSAEGISCITCSGLFQEKPHSLQNNFRTSLEKKKRGSASPWGSKGSISDTGQQDLQGTVYISKSRSKGRPAIYRFSLNASIPAPWQMVSPGDGEVPSFQVYRVPFGNFTRKLTACVSTVGLLKQTSPRKWMMTTLSCDSKRGWKFDFSFYVAAKEQQRTRKLYFAQSHKPPYHGRVCVAPPGCLLSSSPDGPTKGILYVPSEKAAPKARLSATSGFNPCMNMGCGKPAVRPLVDTGAMVFVVFGIRGVNRTKNSDNHVIGDMGSVIYDDSFDLFKEIGNLCRLCKAIASNTELVKPGGAQCLPSGYSISSFLQMLHPECKNIPEPNLLPGQLSHGAVGVKDGKVQWISMAFESTTYKGKSSFQTYADYLKWETFLQQQLQLFPEGSALRHGFQTCEHWKQIFMEIIGVQSALYGLILSLVICVAAVAVFTTHILLLLPVLLSILGVVCLVVTIMYWSGWEMGAVEAISLSILVGSSVDYCVHLVEGYLLAGENLPLHHAEDPTACRQWRTIEAIRHVGVAIVSSAVTTVIATVPLFFCIIAPFAKFGKIVALNTGVSILYTLTVSTALLSIMGPGTFTRSRTSCLKAVAGVLLAGLLGLCICLALLKGGFKIPLPNGTAL.

Over 1-67 (MDTEDDPLLQ…VGWIFTNPYC (67 aa)) the chain is Cytoplasmic. The helical transmembrane segment at 68 to 88 (AGFILFLGCAIPAVLAVVMFL) threads the bilayer. The Lumenal segment spans residues 89–406 (HYPALDIDIS…YEVRRTFNND (318 aa)). A disordered region spans residues 164–196 (TRAKRSAPQGRTSSPEPRAHPHPGNETSRVTRG). In terms of domain architecture, SSD spans 401 to 559 (RTFNNDMLLA…LFTMPAALGI (159 aa)). Residues 407-427 (MLLAFISSSCIAVLVYILTSC) traverse the membrane as a helical segment. A topological domain (cytoplasmic) is located at residue serine 428. A helical transmembrane segment spans residues 429-449 (VFLSFFGIASIGLSCLVALFL). The Lumenal segment spans residues 450–452 (YHV). The chain crosses the membrane as a helical span at residues 453–473 (VFGIQYLGILNGVAAFVIVGI). Over 474-517 (GVDDVFVFINTYRQATHLKDLRLRMIHTIQTAGKATFFTSLTTA) the chain is Cytoplasmic. The helical transmembrane segment at 518–538 (AAYAANIFSQIPAVHDFGLFM) threads the bilayer. Position 539 (serine 539) is a topological domain, lumenal. The chain crosses the membrane as a helical span at residues 540 to 560 (LIVSCCWVAVLFTMPAALGIW). Residues 561–672 (TLYVSPLESS…WVLWSAVKSR (112 aa)) are Cytoplasmic-facing. The helical transmembrane segment at 673–693 (WVIVGLFLLVLLLSIFFASRL) threads the bilayer. Residues 694-1128 (RPASRAPVLF…IFMEIIGVQS (435 aa)) lie on the Lumenal side of the membrane. A disordered region spans residues 747–768 (SLEKKKRGSASPWGSKGSISDT). A helical transmembrane segment spans residues 1129–1149 (ALYGLILSLVICVAAVAVFTT). Residue histidine 1150 is a topological domain, cytoplasmic. The helical transmembrane segment at 1151–1171 (ILLLLPVLLSILGVVCLVVTI) threads the bilayer. The Lumenal portion of the chain corresponds to 1172–1237 (MYWSGWEMGA…TIEAIRHVGV (66 aa)). Residues 1238-1258 (AIVSSAVTTVIATVPLFFCII) traverse the membrane as a helical segment. At 1259–1266 (APFAKFGK) the chain is on the cytoplasmic side. A helical transmembrane segment spans residues 1267–1287 (IVALNTGVSILYTLTVSTALL). At 1288–1302 (SIMGPGTFTRSRTSC) the chain is on the lumenal side. A helical transmembrane segment spans residues 1303–1323 (LKAVAGVLLAGLLGLCICLAL). The Cytoplasmic portion of the chain corresponds to 1324–1338 (LKGGFKIPLPNGTAL).

This sequence belongs to the patched family. In terms of tissue distribution, expressed in retina, hippocampus and cerebellum. Expressed in the ganglion and bipolar cells of the inner and outer nuclear layers of the retina and in Purkinje cells (at protein level). Expressed strongly in brain and retina, weakly in testis and bone marrow.

It is found in the endoplasmic reticulum membrane. It localises to the nucleus membrane. Its subcellular location is the cytoplasmic vesicle membrane. Plays a role in neuronal proliferation and differentiation. Plays a role in the accumulation of cellular cholesterol. Involved in intracellular lipid droplet formation. May contribute to cholesterol homeostasis in neuronal cells. This chain is Protein dispatched homolog 3, found in Gallus gallus (Chicken).